We begin with the raw amino-acid sequence, 937 residues long: Bifunctional glutamine synthetase adenylyltransferase/adenylyl-removing enzyme (937 aa).

The segment at 1 to 436 (MSQPIPSASP…AAEFAELLAP (436 aa)) is adenylyl removase. Residues 443–937 (PDTLADYWRA…QLRFQPGKGA (495 aa)) form an adenylyl transferase region.

The protein belongs to the GlnE family. Mg(2+) serves as cofactor.

It carries out the reaction [glutamine synthetase]-O(4)-(5'-adenylyl)-L-tyrosine + phosphate = [glutamine synthetase]-L-tyrosine + ADP. The catalysed reaction is [glutamine synthetase]-L-tyrosine + ATP = [glutamine synthetase]-O(4)-(5'-adenylyl)-L-tyrosine + diphosphate. Involved in the regulation of glutamine synthetase GlnA, a key enzyme in the process to assimilate ammonia. When cellular nitrogen levels are high, the C-terminal adenylyl transferase (AT) inactivates GlnA by covalent transfer of an adenylyl group from ATP to specific tyrosine residue of GlnA, thus reducing its activity. Conversely, when nitrogen levels are low, the N-terminal adenylyl removase (AR) activates GlnA by removing the adenylyl group by phosphorolysis, increasing its activity. The regulatory region of GlnE binds the signal transduction protein PII (GlnB) which indicates the nitrogen status of the cell. The sequence is that of Bifunctional glutamine synthetase adenylyltransferase/adenylyl-removing enzyme from Xanthomonas campestris pv. campestris (strain B100).